The sequence spans 892 residues: Alanine--tRNA ligase (892 aa).

Zn(2+) is bound by residues His-574, His-578, Cys-676, and His-680.

It belongs to the class-II aminoacyl-tRNA synthetase family. Requires Zn(2+) as cofactor.

It is found in the cytoplasm. The enzyme catalyses tRNA(Ala) + L-alanine + ATP = L-alanyl-tRNA(Ala) + AMP + diphosphate. Its function is as follows. Catalyzes the attachment of alanine to tRNA(Ala) in a two-step reaction: alanine is first activated by ATP to form Ala-AMP and then transferred to the acceptor end of tRNA(Ala). Also edits incorrectly charged Ser-tRNA(Ala) and Gly-tRNA(Ala) via its editing domain. This is Alanine--tRNA ligase from Prochlorococcus marinus (strain SARG / CCMP1375 / SS120).